Here is a 117-residue protein sequence, read N- to C-terminus: Small ribosomal subunit protein eS25 (117 aa).

The disordered stretch occupies residues 1–38 (MPPKKDAKSSAKQPQKTQKKKEGSGGGKAKKKKWSKGK). Positions 28–37 (KAKKKKWSKG) are enriched in basic residues.

It belongs to the eukaryotic ribosomal protein eS25 family.

This is Small ribosomal subunit protein eS25 (RpS25) from Drosophila melanogaster (Fruit fly).